A 416-amino-acid polypeptide reads, in one-letter code: Multifunctional CCA protein (416 aa).

Residues glycine 8 and arginine 11 each contribute to the ATP site. Glycine 8 and arginine 11 together coordinate CTP. Positions 21 and 23 each coordinate Mg(2+). ATP is bound by residues arginine 91, arginine 137, and arginine 140. CTP is bound by residues arginine 91, arginine 137, and arginine 140. An HD domain is found at 228–329 (TGLHTMLVLA…IKLFDKADFW (102 aa)).

The protein belongs to the tRNA nucleotidyltransferase/poly(A) polymerase family. Bacterial CCA-adding enzyme type 1 subfamily. Monomer. Can also form homodimers and oligomers. Mg(2+) is required as a cofactor. Requires Ni(2+) as cofactor.

It catalyses the reaction a tRNA precursor + 2 CTP + ATP = a tRNA with a 3' CCA end + 3 diphosphate. The catalysed reaction is a tRNA with a 3' CCA end + 2 CTP + ATP = a tRNA with a 3' CCACCA end + 3 diphosphate. Functionally, catalyzes the addition and repair of the essential 3'-terminal CCA sequence in tRNAs without using a nucleic acid template. Adds these three nucleotides in the order of C, C, and A to the tRNA nucleotide-73, using CTP and ATP as substrates and producing inorganic pyrophosphate. tRNA 3'-terminal CCA addition is required both for tRNA processing and repair. Also involved in tRNA surveillance by mediating tandem CCA addition to generate a CCACCA at the 3' terminus of unstable tRNAs. While stable tRNAs receive only 3'-terminal CCA, unstable tRNAs are marked with CCACCA and rapidly degraded. The protein is Multifunctional CCA protein of Shewanella sp. (strain ANA-3).